The sequence spans 405 residues: BRCA1-A complex subunit Abraxas 1 (405 aa).

The region spanning 7–153 is the MPN domain; it reads SALLSGFVFG…CSTYRLEHAL (147 aa). Residues 208-262 adopt a coiled-coil conformation; it reads SLQEVHKINEMYATLQEELKKMCSDVEVSERSVEKLLTEVSQLKEEINRKKQHKI. The tract at residues 365–405 is disordered; that stretch reads LHQDEEDCNQETKLALSSAETDEEALENPKDTNEYSYSPTF. A Phosphoserine modification is found at Ser402. The pSXXF motif motif lies at 402 to 405; the sequence is SPTF.

Belongs to the FAM175 family. Abraxas subfamily. As to quaternary structure, component of the BRCA1-A complex. Component of the BRISC complex. Homodimer. Interacts directly (when phosphorylated at Ser-402) with BRCA1. The phosphorylated homodimer can interact directly with two BRCA1 chains, giving rise to a heterotetramer. In terms of processing, phosphorylation of Ser-402 of the pSXXF motif by ATM or ATR constitutes a specific recognition motif for the BRCT domain of BRCA1.

It is found in the nucleus. In terms of biological role, involved in DNA damage response and double-strand break (DSB) repair. Component of the BRCA1-A complex, acting as a central scaffold protein that assembles the various components of the complex and mediates the recruitment of BRCA1. The BRCA1-A complex specifically recognizes 'Lys-63'-linked ubiquitinated histones H2A and H2AX at DNA lesion sites, leading to target the BRCA1-BARD1 heterodimer to sites of DNA damage at DSBs. This complex also possesses deubiquitinase activity that specifically removes 'Lys-63'-linked ubiquitin on histones H2A and H2AX. The polypeptide is BRCA1-A complex subunit Abraxas 1 (Gallus gallus (Chicken)).